We begin with the raw amino-acid sequence, 407 residues long: Phosphopentomutase (407 aa).

Mn(2+)-binding residues include Asp10, Asp306, His311, Asp347, His348, and His359.

It belongs to the phosphopentomutase family. Requires Mn(2+) as cofactor.

Its subcellular location is the cytoplasm. The catalysed reaction is 2-deoxy-alpha-D-ribose 1-phosphate = 2-deoxy-D-ribose 5-phosphate. The enzyme catalyses alpha-D-ribose 1-phosphate = D-ribose 5-phosphate. The protein operates within carbohydrate degradation; 2-deoxy-D-ribose 1-phosphate degradation; D-glyceraldehyde 3-phosphate and acetaldehyde from 2-deoxy-alpha-D-ribose 1-phosphate: step 1/2. Its function is as follows. Isomerase that catalyzes the conversion of deoxy-ribose 1-phosphate (dRib-1-P) and ribose 1-phosphate (Rib-1-P) to deoxy-ribose 5-phosphate (dRib-5-P) and ribose 5-phosphate (Rib-5-P), respectively. This chain is Phosphopentomutase, found in Pectobacterium carotovorum subsp. carotovorum (strain PC1).